A 424-amino-acid chain; its full sequence is MFLLPRFCLVCSIISTFGFQNPPTNVVSHFNDDWFLFGDSRTDCNHVVKTNPRNYSYMDLNPALCDSGKISSKAGNSIFRSFHFTDFYNYTGEGQQIIFYEGVNFTPYHAFKCTSVGNNDIWMQNKGLFYTQVYKKMAVYRSLTLVNVPYVYNGSAQPTALCKSGSLILNNPAYIAREANVGDYYYKSEADFSLSGCDEYIVPLCIFNGKFLSNTKYYDDSQYYFNKDTGVIYGLNSTETITTGFDFNCHYLVLPSGNYLAISNELLLTVPTKAICLNKRKVFTPVQVVDSRWNNARQSDNMTAVACQLPYCYFRNSTSNYVGIYDVNHGDAGFTSILSGLLYDSPCFSQQGVFRYDNVSTVWPLFPFGNCPTAASIISSDLPICVYDPLPIILLGILLGVAVIVIVVLLLYFMVDNGIRQHYA.

Positions Met-1–Thr-16 are cleaved as a signal peptide. Residues Phe-7–Gly-127 form an esterase domain 1 region. Over Phe-17–Ile-392 the chain is Virion surface. Residue Ser-40 is the Nucleophile of the active site. The cysteines at positions 44 and 65 are disulfide-linked. Residues Asn-54, Asn-89, Asn-153, Asn-236, and Asn-301 are each glycosylated (N-linked (GlcNAc...) asparagine; by host). 3 disulfides stabilise this stretch: Cys-113/Cys-162, Cys-197/Cys-276, and Cys-205/Cys-249. The receptor binding stretch occupies residues Leu-128 to Leu-266. The tract at residues Leu-267–Ser-379 is esterase domain 2. Cys-307 and Cys-312 are oxidised to a cystine. N-linked (GlcNAc...) asparagine; by host glycosylation occurs at Asn-316. Catalysis depends on charge relay system residues Asp-326 and His-329. Cys-347 and Cys-371 are disulfide-bonded. N-linked (GlcNAc...) asparagine; by host glycosylation occurs at Asn-358. Residues Ile-393–Phe-413 traverse the membrane as a helical segment. The Intravirion segment spans residues Met-414–Ala-424.

Belongs to the influenza type C/coronaviruses hemagglutinin-esterase family. As to quaternary structure, homodimer; disulfide-linked. Forms a complex with the M protein in the pre-Golgi. Associates then with S-M complex to form a ternary complex S-M-HE. In terms of processing, N-glycosylated in the host RER.

Its subcellular location is the virion membrane. It is found in the host cell membrane. The catalysed reaction is N-acetyl-9-O-acetylneuraminate + H2O = N-acetylneuraminate + acetate + H(+). The enzyme catalyses N-acetyl-4-O-acetylneuraminate + H2O = N-acetylneuraminate + acetate + H(+). In terms of biological role, structural protein that makes short spikes at the surface of the virus. Contains receptor binding and receptor-destroying activities. Mediates de-O-acetylation of N-acetyl-4-O-acetylneuraminic acid, which is probably the receptor determinant recognized by the virus on the surface of erythrocytes and susceptible cells. This receptor-destroying activity is important for virus release as it probably helps preventing self-aggregation and ensures the efficient spread of the progeny virus from cell to cell. May serve as a secondary viral attachment protein for initiating infection, the spike protein being the major one. May become a target for both the humoral and the cellular branches of the immune system. This is Hemagglutinin-esterase from Sus scrofa (Pig).